The chain runs to 329 residues: Diaminopimelate epimerase (329 aa).

Positions 14 and 73 each coordinate substrate. The Proton donor role is filled by C82. Residues 83–84 (GN), N170, N206, and 224–225 (ER) contribute to the substrate site. The Proton acceptor role is filled by C233. 234–235 (GT) is a binding site for substrate.

It belongs to the diaminopimelate epimerase family. Homodimer.

Its subcellular location is the cytoplasm. It carries out the reaction (2S,6S)-2,6-diaminopimelate = meso-2,6-diaminopimelate. It functions in the pathway amino-acid biosynthesis; L-lysine biosynthesis via DAP pathway; DL-2,6-diaminopimelate from LL-2,6-diaminopimelate: step 1/1. In terms of biological role, catalyzes the stereoinversion of LL-2,6-diaminopimelate (L,L-DAP) to meso-diaminopimelate (meso-DAP), a precursor of L-lysine and an essential component of the bacterial peptidoglycan. The sequence is that of Diaminopimelate epimerase from Listeria monocytogenes serotype 4b (strain CLIP80459).